The sequence spans 422 residues: Tryptophan synthase beta chain 2 (422 aa).

K111 is subject to N6-(pyridoxal phosphate)lysine.

The protein belongs to the TrpB family. In terms of assembly, tetramer of two alpha and two beta chains. Pyridoxal 5'-phosphate is required as a cofactor.

It catalyses the reaction (1S,2R)-1-C-(indol-3-yl)glycerol 3-phosphate + L-serine = D-glyceraldehyde 3-phosphate + L-tryptophan + H2O. It participates in amino-acid biosynthesis; L-tryptophan biosynthesis; L-tryptophan from chorismate: step 5/5. Its function is as follows. The beta subunit is responsible for the synthesis of L-tryptophan from indole and L-serine. The chain is Tryptophan synthase beta chain 2 (trpB2) from Thermotoga maritima (strain ATCC 43589 / DSM 3109 / JCM 10099 / NBRC 100826 / MSB8).